The chain runs to 119 residues: Microtubule nucleation factor SSNA1 (119 aa).

An N-acetylthreonine modification is found at Thr2. Residues 2–32 (TQQGAALQNYNNELVKCIEELCQKREELCRQ) form an important for localization to the centrosome region. Residues 13-70 (NELVKCIEELCQKREELCRQIQQEEDEKQRLQNEVRQLTEKLARVNENLARKIASRNE) adopt a coiled-coil conformation.

The protein belongs to the SSNA1 family. In terms of assembly, self-associates to form fibrils. Also forms dimers as well as monomers. Interacts with SPAST.

It localises to the nucleus. Its subcellular location is the cytoplasm. It is found in the cytoskeleton. The protein localises to the microtubule organizing center. The protein resides in the centrosome. It localises to the centriole. Its subcellular location is the midbody. It is found in the flagellum basal body. The protein localises to the flagellum axoneme. The protein resides in the cell projection. It localises to the axon. Functionally, microtubule-binding protein which stabilizes dynamic microtubules by slowing growth and shrinkage at both plus and minus ends and serves as a sensor of microtubule damage, protecting microtubules from the microtubule-severing enzyme SPAST. Induces microtubule branching which is mediated by the formation of long SSNA1 fibrils which guide microtubule protofilaments to split apart from the mother microtubule and form daughter microtubules. Plays a role in axon outgrowth and branching. Required for cell division. This chain is Microtubule nucleation factor SSNA1, found in Mus musculus (Mouse).